The primary structure comprises 563 residues: Glutamate--tRNA ligase (563 aa).

Residues 61-94 form a disordered region; sequence PEEQQKEVESLGGLEQHTKKEEKPKGLPELKNTE. A compositionally biased stretch (basic and acidic residues) spans 76–94; that stretch reads QHTKKEEKPKGLPELKNTE. Positions 104 to 114 match the 'HIGH' region motif; that stretch reads PNPSGPLHIGH.

The protein belongs to the class-I aminoacyl-tRNA synthetase family. Glutamate--tRNA ligase type 2 subfamily.

It is found in the cytoplasm. It carries out the reaction tRNA(Glu) + L-glutamate + ATP = L-glutamyl-tRNA(Glu) + AMP + diphosphate. Functionally, catalyzes the attachment of glutamate to tRNA(Glu) in a two-step reaction: glutamate is first activated by ATP to form Glu-AMP and then transferred to the acceptor end of tRNA(Glu). In Methanosphaera stadtmanae (strain ATCC 43021 / DSM 3091 / JCM 11832 / MCB-3), this protein is Glutamate--tRNA ligase.